The following is a 275-amino-acid chain: Probable CCR4-associated factor 1 homolog 7 (275 aa).

A divalent metal cation is bound by residues aspartate 40, glutamate 42, aspartate 167, and aspartate 236.

The protein belongs to the CAF1 family. As to quaternary structure, component of the CCR4-NOT complex, at least composed of CRR4 and CAF1 proteins. It depends on a divalent metal cation as a cofactor.

The protein localises to the nucleus. It localises to the cytoplasm. The enzyme catalyses Exonucleolytic cleavage of poly(A) to 5'-AMP.. Functionally, ubiquitous transcription factor required for a diverse set of processes. It is a component of the CCR4 complex involved in the control of gene expression. The sequence is that of Probable CCR4-associated factor 1 homolog 7 (CAF1-7) from Arabidopsis thaliana (Mouse-ear cress).